The chain runs to 173 residues: Translation initiation factor IF-3 (173 aa).

This sequence belongs to the IF-3 family. As to quaternary structure, monomer.

Its subcellular location is the cytoplasm. Functionally, IF-3 binds to the 30S ribosomal subunit and shifts the equilibrium between 70S ribosomes and their 50S and 30S subunits in favor of the free subunits, thus enhancing the availability of 30S subunits on which protein synthesis initiation begins. The polypeptide is Translation initiation factor IF-3 (Caulobacter sp. (strain K31)).